Reading from the N-terminus, the 539-residue chain is Hydroxylamine reductase (539 aa).

Residues Cys-3, Cys-6, Cys-15, and Cys-21 each contribute to the [4Fe-4S] cluster site. Positions 235, 259, 303, 394, 422, 447, 482, and 484 each coordinate hybrid [4Fe-2O-2S] cluster. The residue at position 394 (Cys-394) is a Cysteine persulfide.

The protein belongs to the HCP family. [4Fe-4S] cluster is required as a cofactor. Requires hybrid [4Fe-2O-2S] cluster as cofactor.

It is found in the cytoplasm. It catalyses the reaction A + NH4(+) + H2O = hydroxylamine + AH2 + H(+). Catalyzes the reduction of hydroxylamine to form NH(3) and H(2)O. In Methanocaldococcus jannaschii (strain ATCC 43067 / DSM 2661 / JAL-1 / JCM 10045 / NBRC 100440) (Methanococcus jannaschii), this protein is Hydroxylamine reductase.